We begin with the raw amino-acid sequence, 113 residues long: U11-theraphotoxin-Hhn1a (113 aa).

Positions Met-1–Ala-21 are cleaved as a signal peptide. A propeptide spanning residues Asp-22–Arg-74 is cleaved from the precursor. Residues Glu-61 to Asp-83 are disordered. 3 disulfides stabilise this stretch: Cys-75–Cys-90, Cys-82–Cys-95, and Cys-89–Cys-110.

It belongs to the neurotoxin 14 (magi-1) family. 01 (HNTX-16) subfamily. In terms of tissue distribution, expressed by the venom gland.

Its subcellular location is the secreted. Probable ion channel inhibitor. This is U11-theraphotoxin-Hhn1a from Cyriopagopus hainanus (Chinese bird spider).